Consider the following 804-residue polypeptide: Zinc finger protein YGR067C (804 aa).

2 consecutive C2H2-type zinc fingers follow at residues 8-30 (YICSFCLKPFSRSEHKIRHERSH) and 36-59 (FQCQVCKHSFVRRDLLQRHIRTVH). Residues 782 to 796 (QEFSASSTDNKQSKN) are compositionally biased toward polar residues. Positions 782–804 (QEFSASSTDNKQSKNIEIFSQIK) are disordered.

It is found in the nucleus. The sequence is that of Zinc finger protein YGR067C from Saccharomyces cerevisiae (strain ATCC 204508 / S288c) (Baker's yeast).